A 2360-amino-acid chain; its full sequence is Nucleoprotein TPR (2360 aa).

The residue at position 2 (alanine 2) is an N-acetylalanine. The interval 3-13 is sufficient for interaction with TPR; sequence AVLQQVLERPE. The tract at residues 14–117 is necessary for interaction with HSF1; that stretch reads LNKLPKSTQN…GIQSQFTRAK (104 aa). A coiled-coil region spans residues 24–370; it reads KLEKFLAEQQ…SATKRKGAIL (347 aa). 3 positions are modified to N6-acetyllysine: lysine 252, lysine 312, and lysine 345. Serine 379 carries the phosphoserine modification. Residues 423–603 are a coiled coil; it reads LDEIVKEVEA…RESRQHQMQL (181 aa). 3 positions are modified to N6-acetyllysine: lysine 428, lysine 457, and lysine 477. Residues 437–513 form a necessary for association to the NPC region; that stretch reads LKRQREEYER…LMELEEARGN (77 aa). Serine 522, serine 523, and serine 632 each carry phosphoserine. Residues 664-1172 are a coiled coil; sequence ETIEAKAALK…IEKLSDKVVT (509 aa). 4 positions are modified to N6-acetyllysine: lysine 713, lysine 723, lysine 748, and lysine 755. A compositionally biased stretch (polar residues) spans 915–924; the sequence is LASQSTQRTG. Residues 915–939 form a disordered region; that stretch reads LASQSTQRTGKGQPGDRDDVDDLKS. Over residues 928 to 939 the composition is skewed to basic and acidic residues; sequence PGDRDDVDDLKS. 2 positions are modified to phosphoserine: serine 1180 and serine 1185. Coiled-coil stretches lie at residues 1215 to 1420 and 1472 to 1629; these read EVAQ…LDAK and VQEM…QRDE. Positions 1218–1320 are necessary for interaction with HSF1; it reads QVESLRYRQR…NAELSEKSGM (103 aa). Disordered stretches follow at residues 1479 to 1520 and 1618 to 1673; these read KDNL…TAQL and EHQE…PTPV. Basic and acidic residues-rich tracts occupy residues 1503–1512 and 1618–1630; these read LSEKETEARS and EHQE…RDEP. Positions 1632 to 1651 are enriched in polar residues; that stretch reads EPTNKAPEQQRQITLKTTPA. Lysine 1689 bears the N6-acetyllysine mark. Position 1691 is a phosphothreonine (threonine 1691). The segment covering 1801–1826 has biased composition (polar residues); the sequence is QSSPVERPSTSTAVFGTVSATPSSSL. The tract at residues 1801 to 2122 is disordered; the sequence is QSSPVERPST…TPGIGGMQQH (322 aa). The sufficient and essential for mediating its nuclear import stretch occupies residues 1811–1866; it reads STAVFGTVSATPSSSLPKRAREEEEDSTIEAGDQVSDDTVEMPLPKKLKTVTPVGT. The segment covering 1866–1880 has biased composition (acidic residues); sequence TEEEVMAEESTDGEA. A compositionally biased stretch (polar residues) spans 1881 to 1892; the sequence is ETQTYNQDSQDS. Residue serine 1892 is modified to Phosphoserine. Over residues 1923-1934 the composition is skewed to low complexity; that stretch reads QSDQQTTSSQDG. Acidic residues-rich tracts occupy residues 1945 to 1986 and 1996 to 2017; these read DSDD…EDSN and DGYE…ETEE. The segment covering 2023–2061 has biased composition (polar residues); sequence ESNQRAADSQNSGEGNTSAAESSFSQEVAREQQPTSASE. Serine 2031, serine 2034, serine 2045, serine 2047, and serine 2070 each carry phosphoserine. Omega-N-methylarginine is present on residues arginine 2103 and arginine 2108. Residues threonine 2113 and threonine 2134 each carry the phosphothreonine modification. A Phosphoserine modification is found at serine 2152. The residue at position 2160 (arginine 2160) is an Omega-N-methylarginine. The segment covering 2224–2241 has biased composition (polar residues); the sequence is ESTTSDASEHASQSVPMV. Residues 2224-2360 form a disordered region; the sequence is ESTTSDASEH…RGGINRGNIN (137 aa). Positions 2242-2254 are enriched in low complexity; the sequence is TTSTGTLSTTNET. 2 stretches are compositionally biased toward acidic residues: residues 2256–2269 and 2282–2296; these read AGDD…ETES and SQQE…DESD. Residues 2297-2317 are compositionally biased toward low complexity; sequence LPSTSQDPPSSSSVDTSSSQP. Asymmetric dimethylarginine is present on residues arginine 2340, arginine 2342, and arginine 2351. A compositionally biased stretch (gly residues) spans 2349-2360; sequence GGRGGINRGNIN.

It belongs to the TPR family. As to quaternary structure, homodimer. Part of the nuclear pore complex (NPC). Associates with the XPO1/CRM1-mediated nuclear export complex, the Importin alpha/Importin beta receptor and the dynein 1 complex. Interacts (via C-terminal domain) with the KPNB1; the interaction occurs in a RanGTP-dependent manner. Interacts (via C-terminal region and phosphorylated form) with MAPK1/ERK2 (via phosphorylated form); the interaction requires dimerization of MAPK1/ERK2 and increases following EGF stimulation. Interacts with MAPK3/ERK1; the interaction increases following EGF stimulation. Interacts (via coiled coil region) with NUP153; the interaction is direct. Interacts with HSF1; the interaction increases in a stress-responsive manner and stimulates export of stress-induced HSP70 mRNA. Interacts with huntingtin/HTT; the interaction is inhibited by aggregated huntingtin/HTT forms with expanded polyglutamine stretch. Interacts with MAD1L1 (via N-terminal region), MAD2L1, and TTK; the interactions occurs in a microtubule-independent manner. Interacts (via middle region) with DYNLL1. Interacts with DCTN1, dynein, NUP153 and tubulin. Interacts with IFI204 (via C-terminal region). Interacts with IFI203. Interacts with MTA1. Interacts with ZC3HC1; this interaction mediates ZC3HC1 nuclear envelopes (NE)-association but also required for proper positioning of a substantial amount of TPR at the nuclear basket (NB). In terms of processing, phosphorylated. Phosphorylation occurs on serine and threonine residues (comprised in the C-terminal region) by MAPK1/ERK2 and stabilizes the interaction between these two proteins.

The protein localises to the nucleus. The protein resides in the nucleus membrane. It is found in the nucleus envelope. It localises to the nuclear pore complex. Its subcellular location is the cytoplasm. The protein localises to the cytoskeleton. The protein resides in the spindle. It is found in the chromosome. It localises to the centromere. Its subcellular location is the kinetochore. Functionally, component of the nuclear pore complex (NPC), a complex required for the trafficking across the nuclear envelope. Functions as a scaffolding element in the nuclear phase of the NPC essential for normal nucleocytoplasmic transport of proteins and mRNAs, plays a role in the establishment of nuclear-peripheral chromatin compartmentalization in interphase, and in the mitotic spindle checkpoint signaling during mitosis. Involved in the quality control and retention of unspliced mRNAs in the nucleus; in association with NUP153, regulates the nuclear export of unspliced mRNA species bearing constitutive transport element (CTE) in a NXF1- and KHDRBS1-independent manner. Negatively regulates both the association of CTE-containing mRNA with large polyribosomes and translation initiation. Does not play any role in Rev response element (RRE)-mediated export of unspliced mRNAs. Implicated in nuclear export of mRNAs transcribed from heat shock gene promoters; associates both with chromatin in the HSP70 promoter and with mRNAs transcribed from this promoter under stress-induced conditions. Modulates the nucleocytoplasmic transport of activated MAPK1/ERK2 and huntingtin/HTT and may serve as a docking site for the XPO1/CRM1-mediated nuclear export complex. Also plays a role as a structural and functional element of the perinuclear chromatin distribution; involved in the formation and/or maintenance of NPC-associated perinuclear heterochromatin exclusion zones (HEZs). Finally, acts as a spatial regulator of the spindle-assembly checkpoint (SAC) response ensuring a timely and effective recruitment of spindle checkpoint proteins like MAD1L1 and MAD2L1 to unattached kinetochore during the metaphase-anaphase transition before chromosome congression. Its N-terminus is involved in activation of oncogenic kinases. Plays a role in the regulation of nuclear protein export. This Rattus norvegicus (Rat) protein is Nucleoprotein TPR.